Reading from the N-terminus, the 115-residue chain is Succinate dehydrogenase hydrophobic membrane anchor subunit (115 aa).

At 1-15 (MVSNASALGRNGVHD) the chain is on the cytoplasmic side. A helical transmembrane segment spans residues 16 to 36 (FILVRATAIVLTLYIIYMVGF). The Periplasmic portion of the chain corresponds to 37-58 (FATSGELTYEVWIGFFASAFTK). A helical transmembrane segment spans residues 59–80 (VFTLLALFSILIHAWIGMWQVL). H71 provides a ligand contact to heme. Residues 81–90 (TDYVKPLALR) lie on the Cytoplasmic side of the membrane. Position 83 (Y83) interacts with a ubiquinone. Residues 91–115 (LMLQLVIVVALVVYVIYGFVVVWGV) traverse the membrane as a helical segment.

In terms of assembly, part of an enzyme complex containing four subunits: a flavoprotein, an iron-sulfur protein, plus two membrane-anchoring proteins, SdhC and SdhD. The complex can form homotrimers. Heme is required as a cofactor.

The protein localises to the cell inner membrane. It functions in the pathway carbohydrate metabolism; tricarboxylic acid cycle. Functionally, membrane-anchoring subunit of succinate dehydrogenase (SDH). In Escherichia coli O6:H1 (strain CFT073 / ATCC 700928 / UPEC), this protein is Succinate dehydrogenase hydrophobic membrane anchor subunit (sdhD).